The following is a 341-amino-acid chain: Protein arginine N-methyltransferase 1 (341 aa).

An SAM-dependent MTase PRMT-type domain is found at 20 to 315; sequence ADYYFDSYSH…DCAPFDKNQR (296 aa). S-adenosyl-L-methionine is bound by residues H33, R42, G66, D88, and E117. Catalysis depends on residues E132 and E141.

The protein belongs to the class I-like SAM-binding methyltransferase superfamily. Protein arginine N-methyltransferase family.

The protein localises to the nucleus. It is found in the cytoplasm. The protein resides in the cytosol. The catalysed reaction is L-arginyl-[protein] + 2 S-adenosyl-L-methionine = N(omega),N(omega)-dimethyl-L-arginyl-[protein] + 2 S-adenosyl-L-homocysteine + 2 H(+). It carries out the reaction L-arginyl-[protein] + S-adenosyl-L-methionine = N(omega)-methyl-L-arginyl-[protein] + S-adenosyl-L-homocysteine + H(+). Arginine methyltransferase that methylates the guanidino nitrogens of arginyl residues present in proteins such as ribonucleoproteins and histones. The polypeptide is Protein arginine N-methyltransferase 1 (prmt1) (Dictyostelium discoideum (Social amoeba)).